We begin with the raw amino-acid sequence, 526 residues long: Peptide chain release factor 3 (526 aa).

The 270-residue stretch at 8–277 (DKRRTFAIIS…GLTQWAPKPQ (270 aa)) folds into the tr-type G domain. GTP is bound by residues 17–24 (SHPDAGKT), 85–89 (DTPGH), and 139–142 (NKLD).

Belongs to the TRAFAC class translation factor GTPase superfamily. Classic translation factor GTPase family. PrfC subfamily.

It localises to the cytoplasm. Functionally, increases the formation of ribosomal termination complexes and stimulates activities of RF-1 and RF-2. It binds guanine nucleotides and has strong preference for UGA stop codons. It may interact directly with the ribosome. The stimulation of RF-1 and RF-2 is significantly reduced by GTP and GDP, but not by GMP. This is Peptide chain release factor 3 from Actinobacillus succinogenes (strain ATCC 55618 / DSM 22257 / CCUG 43843 / 130Z).